Consider the following 502-residue polypeptide: Maturase K (502 aa).

The protein belongs to the intron maturase 2 family. MatK subfamily.

It is found in the plastid. It localises to the chloroplast. Its function is as follows. Usually encoded in the trnK tRNA gene intron. Probably assists in splicing its own and other chloroplast group II introns. This Stanleya pinnata (Prince's plume) protein is Maturase K.